The sequence spans 183 residues: Potassium-transporting ATPase KdpC subunit (183 aa).

The helical transmembrane segment at 10–30 threads the bilayer; the sequence is ASLLVLSLVTGVAYPLLVTGI.

The protein belongs to the KdpC family. As to quaternary structure, the system is composed of three essential subunits: KdpA, KdpB and KdpC.

The protein localises to the cell inner membrane. Part of the high-affinity ATP-driven potassium transport (or Kdp) system, which catalyzes the hydrolysis of ATP coupled with the electrogenic transport of potassium into the cytoplasm. This subunit acts as a catalytic chaperone that increases the ATP-binding affinity of the ATP-hydrolyzing subunit KdpB by the formation of a transient KdpB/KdpC/ATP ternary complex. This chain is Potassium-transporting ATPase KdpC subunit, found in Pseudomonas aeruginosa (strain UCBPP-PA14).